An 816-amino-acid chain; its full sequence is Mitogen-activated protein kinase 7 (816 aa).

The tract at residues 1-26 (MAEPLKEEDGEDGSAEPPGPVKAEPA) is disordered. Ala-2 carries the post-translational modification N-acetylalanine. Residues 2–77 (AEPLKEEDGE…VVSSARRRLT (76 aa)) form a required for cytoplasmic targeting region. The 293-residue stretch at 55–347 (YEIIETIGNG…AAAALRHPFL (293 aa)) folds into the Protein kinase domain. ATP-binding positions include 61–69 (IGNGAYGVV) and Lys-84. Residues 78–139 (GQQVAIKKIP…FKSVYVVLDL (62 aa)) form a required for binding to MAP2K5 region. Positions 140–406 (MESDLHQIIH…QQIRFQPSLQ (267 aa)) are necessary for oligomerization. Asp-182 acts as the Proton acceptor in catalysis. Residues 219–221 (TEY) carry the TXY motif. The segment at 406-737 (QPVASEPGCP…PVFSGTPKGS (332 aa)) is disordered. A may not be required for kinase activity; required to stimulate MEF2C activity region spans residues 407–806 (PVASEPGCPD…REIQMDSPML (400 aa)). Composition is skewed to pro residues over residues 433–445 (SPPP…PGPA) and 454–463 (QPPPPVSEPA). Low complexity predominate over residues 476–486 (KAALKAALLKS). Composition is skewed to basic and acidic residues over residues 502–519 (PEPR…EREE), 527–544 (RAKE…KERG), and 563–573 (DNDRSLLERWT). A Nuclear localization signal motif is present at residues 505–539 (RKPVTAQERQREREEKRRRRQERAKEREKRRQERE). Low complexity predominate over residues 578 to 587 (PAAPALTSVP). 2 stretches are compositionally biased toward pro residues: residues 588–610 (APAP…PGPV) and 628–655 (VPQP…PAPP). The segment covering 676–685 (PGSSTPGVLP) has biased composition (low complexity). The span at 686 to 695 (YFPPGLPPPD) shows a compositional bias: pro residues. Polar residues predominate over residues 701 to 720 (QSSMSESPDVNLVTQQLSKS). Residue Ser-720 is modified to Phosphoserine. Position 733 is a phosphothreonine (Thr-733).

Belongs to the protein kinase superfamily. CMGC Ser/Thr protein kinase family. MAP kinase subfamily. Interacts with MAP2K5. Forms oligomers. Interacts with MEF2A, MEF2C and MEF2D; the interaction phosphorylates the MEF2s and enhances transcriptional activity of MEF2A, MEF2C but not MEF2D. Interacts with SGK1. Preferentially interacts with PML isoform PML-4 but shows interaction also with its other isoforms: isoform PML-1, isoform PML-2, isoform PML-3 and isoform PML-6. Interacts (via N-terminal half) with HSP90AB1-CDC37 chaperone complex in resting cells; the interaction is MAP2K5-independent and prevents MAPK7 from ubiquitination and proteasomal degradation. Interacts with STUB1/CHIP; the interaction is enhanced in the presence of IGF1 or MAP2K5 and promotes STUB1/CHIP E3 ligase activity. Mg(2+) is required as a cofactor. Post-translationally, dually phosphorylated on Thr-219 and Tyr-221, which activates the enzyme. Autophosphorylated in vitro on threonine and tyrosine residues when the C-terminal part of the kinase, which could have a regulatory role, is absent. As to expression, expressed in many adult tissues. Abundant in heart, placenta, lung, kidney and skeletal muscle. Not detectable in liver.

It localises to the cytoplasm. Its subcellular location is the nucleus. The protein localises to the PML body. It catalyses the reaction L-seryl-[protein] + ATP = O-phospho-L-seryl-[protein] + ADP + H(+). The enzyme catalyses L-threonyl-[protein] + ATP = O-phospho-L-threonyl-[protein] + ADP + H(+). Its activity is regulated as follows. Activated by tyrosine and threonine phosphorylation. Activated in response to hyperosmolarity, hydrogen peroxide, and epidermal growth factor (EGF). Plays a role in various cellular processes such as proliferation, differentiation and cell survival. The upstream activator of MAPK7 is the MAPK kinase MAP2K5. Upon activation, it translocates to the nucleus and phosphorylates various downstream targets including MEF2C. EGF activates MAPK7 through a Ras-independent and MAP2K5-dependent pathway. As part of the MAPK/ERK signaling pathway, acts as a negative regulator of apoptosis in cardiomyocytes via interaction with STUB1/CHIP and promotion of STUB1-mediated ubiquitination and degradation of ICER-type isoforms of CREM. May have a role in muscle cell differentiation. May be important for endothelial function and maintenance of blood vessel integrity. MAP2K5 and MAPK7 interact specifically with one another and not with MEK1/ERK1 or MEK2/ERK2 pathways. Phosphorylates SGK1 at Ser-78 and this is required for growth factor-induced cell cycle progression. Involved in the regulation of p53/TP53 by disrupting the PML-MDM2 interaction. The protein is Mitogen-activated protein kinase 7 (MAPK7) of Homo sapiens (Human).